Consider the following 275-residue polypeptide: Dihydroxyacetone phosphatase (275 aa).

Aspartate 10 acts as the Nucleophile in catalysis. Mg(2+)-binding residues include aspartate 10, aspartate 12, and aspartate 206. The active-site Proton donor/acceptor is the aspartate 12.

The protein belongs to the HAD-like hydrolase superfamily. In terms of assembly, homohexamer. Requires Mg(2+) as cofactor.

It carries out the reaction dihydroxyacetone phosphate + H2O = dihydroxyacetone + phosphate. Functionally, catalyzes dephosphorylation of dihydroxyacetone phosphate (DHAP) to produce 1,3-dihydroxyacetone (DHA). Is the main enzyme responsible for DHA production from catabolism of sugars (glucose, fructose, and sucrose) in C.glutamicum. Displays no activity toward nucleoside monophosphates (AMP, CMP, GMP, or UMP). In Corynebacterium glutamicum (strain R), this protein is Dihydroxyacetone phosphatase.